Consider the following 448-residue polypeptide: Inositol hexakisphosphate kinase 2 (448 aa).

ATP-binding positions include 229 to 231 and aspartate 242; that span reads ENL. Substrate is bound by residues 238 to 246, lysine 244, and 258 to 265; these read PCVLDLKMG and KAANQIRK. Aspartate 405 lines the ATP pocket. Histidine 408 provides a ligand contact to substrate.

This sequence belongs to the inositol phosphokinase (IPK) family. In terms of tissue distribution, highly expressed in brain and lung, and at slightly lower levels in liver, kidney and testis.

It localises to the nucleus. The catalysed reaction is 1D-myo-inositol hexakisphosphate + ATP = 5-diphospho-1D-myo-inositol 1,2,3,4,6-pentakisphosphate + ADP. The protein operates within phospholipid metabolism; phosphatidylinositol metabolism. Converts inositol hexakisphosphate (InsP6) to diphosphoinositol pentakisphosphate (InsP7/PP-InsP5). May play a role in the regulation of Na(+)-dependent phosphate cotransport, possibly via its role in diphosphoinositol pentakisphosphate (InsP7/PP-InsP5) biosynthesis. In Mus musculus (Mouse), this protein is Inositol hexakisphosphate kinase 2 (Ip6k2).